Here is an 81-residue protein sequence, read N- to C-terminus: Cytochrome c oxidase subunit NDUFA4 (81 aa).

Residues methionine 1–serine 14 are Mitochondrial matrix-facing. Lysine 10 bears the N6-acetyllysine mark. The helical transmembrane segment at leucine 15–alanine 37 threads the bilayer. Topologically, residues leucine 38–phenylalanine 81 are mitochondrial intermembrane. Phosphoserine is present on serine 66.

This sequence belongs to the complex IV NDUFA4 subunit family. As to quaternary structure, component of the cytochrome c oxidase (complex IV, CIV), a multisubunit enzyme composed of 14 subunits. The complex is composed of a catalytic core of 3 subunits MT-CO1, MT-CO2 and MT-CO3, encoded in the mitochondrial DNA, and 11 supernumerary subunits COX4I1 (or COX4I2), COX5A, COX5B, COX6A1 (or COX6A2), COX6B1 (or COX6B2), COX6C, COX7A2 (or COX7A1), COX7B, COX7C, COX8A and NDUFA4, which are encoded in the nuclear genome. The complex exists as a monomer or a dimer and forms supercomplexes (SCs) in the inner mitochondrial membrane with NADH-ubiquinone oxidoreductase (complex I, CI) and ubiquinol-cytochrome c oxidoreductase (cytochrome b-c1 complex, complex III, CIII), resulting in different assemblies (supercomplex SCI(1)III(2)IV(1) and megacomplex MCI(2)III(2)IV(2)). Interacts with RAB5IF. Interacts with FLVCR2; this interaction occurs in the absence of heme and is disrupted upon heme binding.

It is found in the mitochondrion inner membrane. Functionally, component of the cytochrome c oxidase, the last enzyme in the mitochondrial electron transport chain which drives oxidative phosphorylation. The respiratory chain contains 3 multisubunit complexes succinate dehydrogenase (complex II, CII), ubiquinol-cytochrome c oxidoreductase (cytochrome b-c1 complex, complex III, CIII) and cytochrome c oxidase (complex IV, CIV), that cooperate to transfer electrons derived from NADH and succinate to molecular oxygen, creating an electrochemical gradient over the inner membrane that drives transmembrane transport and the ATP synthase. Cytochrome c oxidase is the component of the respiratory chain that catalyzes the reduction of oxygen to water. Electrons originating from reduced cytochrome c in the intermembrane space (IMS) are transferred via the dinuclear copper A center (CU(A)) of subunit 2 and heme A of subunit 1 to the active site in subunit 1, a binuclear center (BNC) formed by heme A3 and copper B (CU(B)). The BNC reduces molecular oxygen to 2 water molecules unsing 4 electrons from cytochrome c in the IMS and 4 protons from the mitochondrial matrix. NDUFA4 is required for complex IV maintenance. The sequence is that of Cytochrome c oxidase subunit NDUFA4 (NDUFA4) from Homo sapiens (Human).